The chain runs to 568 residues: Peptidoglycan D,D-transpeptidase FtsI (568 aa).

The chain crosses the membrane as a helical span at residues 19–39 (FVTLCSIVFLFLVILTLRIIF). Serine 302 acts as the Acyl-ester intermediate in catalysis.

The protein belongs to the transpeptidase family. FtsI subfamily.

It is found in the cell inner membrane. The catalysed reaction is Preferential cleavage: (Ac)2-L-Lys-D-Ala-|-D-Ala. Also transpeptidation of peptidyl-alanyl moieties that are N-acyl substituents of D-alanine.. Its pathway is cell wall biogenesis; peptidoglycan biosynthesis. Functionally, catalyzes cross-linking of the peptidoglycan cell wall at the division septum. This chain is Peptidoglycan D,D-transpeptidase FtsI, found in Buchnera aphidicola subsp. Schizaphis graminum (strain Sg).